Here is a 335-residue protein sequence, read N- to C-terminus: 3-dehydroquinate synthase (335 aa).

NAD(+) contacts are provided by residues 56-61 (DGEKYK), 90-94 (GVITD), 114-115 (TT), lysine 127, lysine 135, and 153-156 (FLKT). Zn(2+) contacts are provided by glutamate 168, histidine 227, and histidine 243.

The protein belongs to the sugar phosphate cyclases superfamily. Dehydroquinate synthase family. NAD(+) is required as a cofactor. It depends on Co(2+) as a cofactor. Requires Zn(2+) as cofactor.

Its subcellular location is the cytoplasm. It catalyses the reaction 7-phospho-2-dehydro-3-deoxy-D-arabino-heptonate = 3-dehydroquinate + phosphate. Its pathway is metabolic intermediate biosynthesis; chorismate biosynthesis; chorismate from D-erythrose 4-phosphate and phosphoenolpyruvate: step 2/7. In terms of biological role, catalyzes the conversion of 3-deoxy-D-arabino-heptulosonate 7-phosphate (DAHP) to dehydroquinate (DHQ). The polypeptide is 3-dehydroquinate synthase (Pyrococcus furiosus (strain ATCC 43587 / DSM 3638 / JCM 8422 / Vc1)).